The primary structure comprises 157 residues: UPF0262 protein RL0614 (157 aa).

It belongs to the UPF0262 family.

This chain is UPF0262 protein RL0614, found in Rhizobium johnstonii (strain DSM 114642 / LMG 32736 / 3841) (Rhizobium leguminosarum bv. viciae).